A 260-amino-acid polypeptide reads, in one-letter code: Thiazole synthase (260 aa).

The active-site Schiff-base intermediate with DXP is K96. Residues G157, A184–G185, and N206–T207 contribute to the 1-deoxy-D-xylulose 5-phosphate site.

Belongs to the ThiG family. In terms of assembly, homotetramer. Forms heterodimers with either ThiH or ThiS.

Its subcellular location is the cytoplasm. The catalysed reaction is [ThiS sulfur-carrier protein]-C-terminal-Gly-aminoethanethioate + 2-iminoacetate + 1-deoxy-D-xylulose 5-phosphate = [ThiS sulfur-carrier protein]-C-terminal Gly-Gly + 2-[(2R,5Z)-2-carboxy-4-methylthiazol-5(2H)-ylidene]ethyl phosphate + 2 H2O + H(+). The protein operates within cofactor biosynthesis; thiamine diphosphate biosynthesis. Its function is as follows. Catalyzes the rearrangement of 1-deoxy-D-xylulose 5-phosphate (DXP) to produce the thiazole phosphate moiety of thiamine. Sulfur is provided by the thiocarboxylate moiety of the carrier protein ThiS. In vitro, sulfur can be provided by H(2)S. This Bradyrhizobium sp. (strain ORS 278) protein is Thiazole synthase.